Here is a 373-residue protein sequence, read N- to C-terminus: MANKDYYEVLGLQKGASDDEIKKAFRKLAIKYHPDKNKGNTEAEEKFKEINEAYQVLSDPEKKSNYDQFGSADFNGGGFGSGGFGGFDMGGFGDIFDMFTGGGSSTRRRNGPVNGNDIEYTLTLTFEEAVFGVEKEITVNRSESCEHCNGSGAEPGTSKKTCPTCSGTGQVRVQRQTPLGSFVSTSTCDRCSGTGNIIEKPCTHCRGNGNVRKTRKINVNIPAGVDTGNVMPLRGQGEHGLRGGSPGDLYIRINVSPSKEFTRKGNDIYIDTHISMAKAALGTEITVKTVEGNVKYTVPEGTQSGTLFRLKGKGVARVNSTGKGDQYVRVIVDIPKGLNQKQKEALYTFMEACGEEMDENTHSFKKNLFGRKK.

The region spanning 5 to 70 (DYYEVLGLQK…EKKSNYDQFG (66 aa)) is the J domain. A CR-type zinc finger spans residues 132 to 214 (GVEKEITVNR…CRGNGNVRKT (83 aa)). Residues C145, C148, C162, C165, C188, C191, C202, and C205 each coordinate Zn(2+). CXXCXGXG motif repeat units lie at residues 145 to 152 (CEHCNGSG), 162 to 169 (CPTCSGTG), 188 to 195 (CDRCSGTG), and 202 to 209 (CTHCRGNG).

This sequence belongs to the DnaJ family. Homodimer. It depends on Zn(2+) as a cofactor.

The protein resides in the cytoplasm. Functionally, participates actively in the response to hyperosmotic and heat shock by preventing the aggregation of stress-denatured proteins and by disaggregating proteins, also in an autonomous, DnaK-independent fashion. Unfolded proteins bind initially to DnaJ; upon interaction with the DnaJ-bound protein, DnaK hydrolyzes its bound ATP, resulting in the formation of a stable complex. GrpE releases ADP from DnaK; ATP binding to DnaK triggers the release of the substrate protein, thus completing the reaction cycle. Several rounds of ATP-dependent interactions between DnaJ, DnaK and GrpE are required for fully efficient folding. Also involved, together with DnaK and GrpE, in the DNA replication of plasmids through activation of initiation proteins. The polypeptide is Chaperone protein DnaJ (Clostridium botulinum (strain Alaska E43 / Type E3)).